The chain runs to 284 residues: 2-dehydro-3-deoxyphosphooctonate aldolase (284 aa).

This sequence belongs to the KdsA family.

It is found in the cytoplasm. The enzyme catalyses D-arabinose 5-phosphate + phosphoenolpyruvate + H2O = 3-deoxy-alpha-D-manno-2-octulosonate-8-phosphate + phosphate. It participates in carbohydrate biosynthesis; 3-deoxy-D-manno-octulosonate biosynthesis; 3-deoxy-D-manno-octulosonate from D-ribulose 5-phosphate: step 2/3. It functions in the pathway bacterial outer membrane biogenesis; lipopolysaccharide biosynthesis. The protein is 2-dehydro-3-deoxyphosphooctonate aldolase of Burkholderia cenocepacia (strain ATCC BAA-245 / DSM 16553 / LMG 16656 / NCTC 13227 / J2315 / CF5610) (Burkholderia cepacia (strain J2315)).